The sequence spans 360 residues: Protein Wnt-2 (360 aa).

A signal peptide spans methionine 1 to serine 25. Cystine bridges form between cysteine 76–cysteine 87, cysteine 127–cysteine 135, cysteine 137–cysteine 157, cysteine 206–cysteine 220, cysteine 208–cysteine 215, cysteine 278–cysteine 309, cysteine 294–cysteine 304, cysteine 308–cysteine 348, cysteine 324–cysteine 339, cysteine 326–cysteine 336, and cysteine 331–cysteine 332. Serine 212 carries the O-palmitoleoyl serine; by PORCN lipid modification. An N-linked (GlcNAc...) asparagine glycan is attached at asparagine 295.

This sequence belongs to the Wnt family. In terms of processing, palmitoleoylation is required for efficient binding to frizzled receptors. Depalmitoleoylation leads to Wnt signaling pathway inhibition.

The protein localises to the secreted. Its subcellular location is the extracellular space. The protein resides in the extracellular matrix. Functionally, ligand for members of the frizzled family of seven transmembrane receptors. Probable developmental protein. May be a signaling molecule which affects the development of discrete regions of tissues. Is likely to signal over only few cell diameters. The chain is Protein Wnt-2 (WNT2) from Ateles geoffroyi (Black-handed spider monkey).